Reading from the N-terminus, the 534-residue chain is GMP synthase [glutamine-hydrolyzing] (534 aa).

A Glutamine amidotransferase type-1 domain is found at 20–210 (MLIILDFGSQ…VYHICDCEPT (191 aa)). Residue Cys-97 is the Nucleophile of the active site. Catalysis depends on residues His-184 and Glu-186. Residues 211–409 (WTTETFVEEA…LGLPEEIVKR (199 aa)) form the GMPS ATP-PPase domain. 238–244 (SGGVDSS) contributes to the ATP binding site.

Homodimer.

The enzyme catalyses XMP + L-glutamine + ATP + H2O = GMP + L-glutamate + AMP + diphosphate + 2 H(+). It participates in purine metabolism; GMP biosynthesis; GMP from XMP (L-Gln route): step 1/1. Its function is as follows. Catalyzes the synthesis of GMP from XMP. The polypeptide is GMP synthase [glutamine-hydrolyzing] (Synechococcus sp. (strain ATCC 27144 / PCC 6301 / SAUG 1402/1) (Anacystis nidulans)).